We begin with the raw amino-acid sequence, 420 residues long: UDP-glucuronic acid decarboxylase 1 (420 aa).

Position 1 is an N-acetylmethionine (Met-1). Residues 1–19 are Cytoplasmic-facing; that stretch reads MVSKALLRLVSAVNRRRMK. A helical; Signal-anchor for type II membrane protein membrane pass occupies residues 20–40; that stretch reads LLLGIALLAYVASVWGNFVNM. At 41–420 the chain is on the lumenal side; the sequence is RSIQENGELK…RIKKGRTRHS (380 aa). Position 94 is a phosphothreonine (Thr-94). NAD(+) contacts are provided by Gly-98, Phe-99, Val-100, Asp-119, Asn-120, Phe-122, Thr-123, Gly-124, Asp-144, and Val-145. Residues Leu-149 and Tyr-150 each coordinate UDP-alpha-D-glucuronate. 2 residues coordinate NAD(+): Leu-159 and Ser-161. Lys-177 lines the UDP-alpha-D-glucuronate pocket. Thr-178 lines the NAD(+) pocket. Positions 185, 188, 191, and 192 each coordinate UDP-alpha-D-glucuronate. NAD(+) is bound by residues Ala-200, Tyr-231, and Lys-235. Catalysis depends on Tyr-231, which acts as the Proton acceptor. UDP-alpha-D-glucuronate contacts are provided by Tyr-245, Gln-248, and Glu-249. 3 residues coordinate NAD(+): Thr-261, His-267, and Arg-272. N-linked (GlcNAc...) asparagine glycosylation occurs at Asn-316.

Belongs to the NAD(P)-dependent epimerase/dehydratase family. UDP-glucuronic acid decarboxylase subfamily. Homodimer and homotetramer. Interacts with AKT1. Requires NAD(+) as cofactor.

The protein resides in the golgi apparatus. It localises to the golgi stack membrane. The catalysed reaction is UDP-alpha-D-glucuronate + H(+) = UDP-alpha-D-xylose + CO2. Its pathway is nucleotide-sugar biosynthesis; UDP-alpha-D-xylose biosynthesis; UDP-alpha-D-xylose from UDP-alpha-D-glucuronate: step 1/1. In terms of biological role, catalyzes the NAD-dependent decarboxylation of UDP-glucuronic acid to UDP-xylose. Necessary for the biosynthesis of the core tetrasaccharide in glycosaminoglycan biosynthesis. This Homo sapiens (Human) protein is UDP-glucuronic acid decarboxylase 1.